The following is a 295-amino-acid chain: Shikimate dehydrogenase (NADP(+)) (295 aa).

Shikimate contacts are provided by residues 22–24 and serine 69; that span reads SLS. The active-site Proton acceptor is lysine 73. Residues asparagine 94 and aspartate 111 each coordinate shikimate. NADP(+) is bound by residues 135-139 and valine 236; that span reads GAGGA. Tyrosine 238 contributes to the shikimate binding site. Glycine 260 contributes to the NADP(+) binding site.

It belongs to the shikimate dehydrogenase family. In terms of assembly, homodimer.

The enzyme catalyses shikimate + NADP(+) = 3-dehydroshikimate + NADPH + H(+). The protein operates within metabolic intermediate biosynthesis; chorismate biosynthesis; chorismate from D-erythrose 4-phosphate and phosphoenolpyruvate: step 4/7. Involved in the biosynthesis of the chorismate, which leads to the biosynthesis of aromatic amino acids. Catalyzes the reversible NADPH linked reduction of 3-dehydroshikimate (DHSA) to yield shikimate (SA). This Streptococcus uberis (strain ATCC BAA-854 / 0140J) protein is Shikimate dehydrogenase (NADP(+)).